A 47-amino-acid chain; its full sequence is Delta-actitoxin-Aspp1a (47 aa).

Cystine bridges form between cysteine 4–cysteine 44, cysteine 6–cysteine 34, and cysteine 27–cysteine 45.

The protein belongs to the sea anemone sodium channel inhibitory toxin family. Type I subfamily.

It is found in the secreted. The protein localises to the nematocyst. In terms of biological role, binds specifically to voltage-gated sodium channels (Nav) (site 3), thereby delaying their inactivation during signal transduction. Has a heart stimulation effect on isolated rat atria that is higher than that of Hk7a, Hk8a and Hk16a. This chain is Delta-actitoxin-Aspp1a, found in Anthopleura sp. (strain 'Zhanjiang') (Sea anemone).